The chain runs to 184 residues: Fungal defensin copsin (184 aa).

Positions 1–23 (MKLSTSLLAIVAVASTFIGNALS) are cleaved as a signal peptide. Residues 24–127 (ATTVPGCFAE…LGRVLPVEKR (104 aa)) constitute a propeptide that is removed on maturation. Gln128 bears the Pyrrolidone carboxylic acid mark. Cystine bridges form between Cys130-Cys159, Cys137-Cys167, Cys145-Cys175, Cys149-Cys177, Cys152-Cys184, and Cys162-Cys181.

The protein belongs to the invertebrate defensin family. Post-translationally, contains a unique connectivity of 6 cysteine bonds in contrast to most other CS-alpha-beta defensins which are linked by 3 or 4 disulfide bonds. Disulfide bonds are essential for structural integrity and antibacterial activity, since activity is lost after treatment with reducing agents. Thanks to disulfide bonds and N-terminal pyroglutamate, the protein is extremely stable in a wide pH and temperature range and insensitive toward proteases.

Its subcellular location is the secreted. The protein resides in the target cell membrane. Its function is as follows. Antimicrobial peptide that acts against Gram-positive bacteria (Listeria spp., Enterococcus spp., B.subtilis, B.anthracis, P.aeruginosa). Is not active against Gram-negative bacteria. It selectively inhibits peptidoglycan biosynthesis through complex formation with the cell wall precursor lipid II (1:1 molar ratio), probably anchoring lipid II to the membrane, thus inhibiting cell wall synthesis. The interaction with lipid II involves the third position of the pentapeptide. Shows bactericidal activity at about 2-fold minimal inhibitory concentrations (MIC), but does not form pore across the membrane. This chain is Fungal defensin copsin, found in Coprinopsis cinerea (Inky cap fungus).